The primary structure comprises 299 residues: MSERKALLILHGKQALNEEVRAAVEARRAAGWDLQVRLTWEAGDAQRLVQEALAAGHTRLIAGGGDGTLRDIAEALANADAPASLVLLPLGTANDFARAAGVPLTPAAALDLLDVPARAIDLGEVGGQMFLNMATGGFGSQVTANTSEDLKKVLGGAAYLFTGLSRFAELSAAYGELQGPGFHWHGELLALGIGNGRQAGGGHELCPGALADDGLLDISILPAPQELVGTLKNLLAGGLGIDNLFVRARLPWVEIKASRGLDINLDGEPLQGDTLRFTARPGALRVHLPEDSPLLGGAR.

A DAGKc domain is found at 1–129 (MSERKALLIL…IDLGEVGGQM (129 aa)). ATP is bound by residues T39, 65–71 (GDGTLRD), and T92. The Mg(2+) site is built by L210, D213, and L215. Residue E268 is the Proton acceptor of the active site.

The protein belongs to the diacylglycerol/lipid kinase family. YegS lipid kinase subfamily. The cofactor is Mg(2+). Ca(2+) is required as a cofactor.

The protein localises to the cytoplasm. Probably phosphorylates lipids; the in vivo substrate is unknown. This is Probable lipid kinase YegS-like from Pseudomonas fluorescens (strain ATCC BAA-477 / NRRL B-23932 / Pf-5).